The sequence spans 342 residues: Methylthioribose-1-phosphate isomerase (342 aa).

Substrate is bound by residues Arg49 to Ala51, Arg86, and Gln187. The active-site Proton donor is the Asp228. Asn238–Lys239 is a substrate binding site.

It belongs to the eIF-2B alpha/beta/delta subunits family. MtnA subfamily.

It carries out the reaction 5-(methylsulfanyl)-alpha-D-ribose 1-phosphate = 5-(methylsulfanyl)-D-ribulose 1-phosphate. The protein operates within amino-acid biosynthesis; L-methionine biosynthesis via salvage pathway; L-methionine from S-methyl-5-thio-alpha-D-ribose 1-phosphate: step 1/6. Functionally, catalyzes the interconversion of methylthioribose-1-phosphate (MTR-1-P) into methylthioribulose-1-phosphate (MTRu-1-P). The chain is Methylthioribose-1-phosphate isomerase from Citrobacter koseri (strain ATCC BAA-895 / CDC 4225-83 / SGSC4696).